A 376-amino-acid chain; its full sequence is N-acetyldiaminopimelate deacetylase (376 aa).

Residue D69 is part of the active site. The Proton acceptor role is filled by E128.

It belongs to the peptidase M20A family. N-acetyldiaminopimelate deacetylase subfamily.

The enzyme catalyses N-acetyl-(2S,6S)-2,6-diaminopimelate + H2O = (2S,6S)-2,6-diaminopimelate + acetate. It functions in the pathway amino-acid biosynthesis; L-lysine biosynthesis via DAP pathway; LL-2,6-diaminopimelate from (S)-tetrahydrodipicolinate (acetylase route): step 3/3. Catalyzes the conversion of N-acetyl-diaminopimelate to diaminopimelate and acetate. This is N-acetyldiaminopimelate deacetylase from Bacillus cytotoxicus (strain DSM 22905 / CIP 110041 / 391-98 / NVH 391-98).